A 584-amino-acid polypeptide reads, in one-letter code: PE-PGRS family protein PE_PGRS11 (584 aa).

In terms of domain architecture, PE spans 1–92 (MSFVIVARDA…AATSYAVTEV (92 aa)). Histidine 290 serves as the catalytic Tele-phosphohistidine intermediate. The Proton donor/acceptor role is filled by glutamate 365. The interval 384-584 (YLVGPIAWTL…LPIGLPSLIP (201 aa)) is phosphoglycerate mutase.

In the N-terminal section; belongs to the mycobacterial PE family. PGRS subfamily. It in the C-terminal section; belongs to the phosphoglycerate mutase family. As to quaternary structure, interacts with human TLR2. It depends on Mg(2+) as a cofactor.

The protein resides in the secreted. Its subcellular location is the cell wall. It localises to the cell surface. The catalysed reaction is (2R)-2-phosphoglycerate = (2R)-3-phosphoglycerate. In terms of biological role, induces maturation and activation of human dendritic cells (DCs), via TLR2-dependent activation of ERK1/2, p38 MAPK, and NF-kappa-B signaling pathways, and enhances the ability of DCs to stimulate CD4(+) T cells. By activating DCs, could potentially contribute to the initiation of innate immune responses during tuberculosis infection and hence regulate the clinical course of tuberculosis. Involved in resistance to oxidative stress, via TLR2-dependent activation of the PI3K-ERK1/2-NF-kappa-B signaling pathway and expression of COX-2 and Bcl2. Also abolishes H(2)O(2)-triggered activation of p38 MAPK. This Mycobacterium tuberculosis (strain ATCC 25618 / H37Rv) protein is PE-PGRS family protein PE_PGRS11.